A 425-amino-acid chain; its full sequence is Caveolae-associated protein 2 (425 aa).

Residues methionine 1–asparagine 42 form a disordered region. The residue at position 2 (glycine 2) is an N-acetylglycine. Residues glycine 2–alanine 168 form an interaction with CAVIN1 region. Residues lysine 10 to lysine 22 show a composition bias toward basic and acidic residues. A phosphoserine mark is found at serine 27, serine 35, serine 37, and serine 51. 2 coiled-coil regions span residues leucine 61–arginine 82 and threonine 125–histidine 154. The segment at leucine 62 to leucine 100 is leucine-zipper. 2 positions are modified to phosphothreonine: threonine 196 and threonine 199. 2 disordered regions span residues threonine 199–serine 234 and isoleucine 271–serine 425. A phosphoserine mark is found at serine 203, serine 204, and serine 218. Residues serine 203–alanine 219 show a composition bias toward acidic residues. The stretch at histidine 210–arginine 268 forms a coiled coil. A compositionally biased stretch (basic and acidic residues) spans glutamate 220–serine 234. Residues serine 274 to serine 287 are compositionally biased toward polar residues. Residues serine 283, serine 284, serine 287, serine 288, and serine 293 each carry the phosphoserine modification. A compositionally biased stretch (basic and acidic residues) spans arginine 303 to aspartate 317. 4 positions are modified to phosphoserine: serine 332, serine 341, serine 366, and serine 370. Residue threonine 375 is modified to Phosphothreonine. The span at isoleucine 376–valine 385 shows a compositional bias: acidic residues. Tyrosine 395 is subject to Phosphotyrosine. The residue at position 403 (serine 403) is a Phosphoserine.

Belongs to the CAVIN family. Component of the CAVIN complex composed of CAVIN1, CAVIN2, CAVIN3 and CAVIN4. Binds to PRKCA in the presence of phosphatidylserine. Interacts with CAVIN4; this augments the transactivation of NPPA by CAVIN4. Interacts with CAVIN1. Interacts with CAV3. Post-translationally, phosphorylated on Ser residues. In terms of tissue distribution, highly expressed in heart and lung, and expressed at lower levels in brain, kidney, liver, pancreas, placenta, and skeletal muscle.

The protein localises to the cytoplasm. It is found in the cytosol. The protein resides in the membrane. Its subcellular location is the caveola. Its function is as follows. Plays an important role in caveolar biogenesis and morphology. Regulates caveolae morphology by inducing membrane curvature within caveolae. Plays a role in caveola formation in a tissue-specific manner. Required for the formation of caveolae in the lung and fat endothelia but not in the heart endothelia. Negatively regulates the size or stability of CAVIN complexes in the lung endothelial cells. May play a role in targeting PRKCA to caveolae. The protein is Caveolae-associated protein 2 of Homo sapiens (Human).